The primary structure comprises 326 residues: MDKNRRRTDDAGLMTKTLAGIAALVFFLSFICSSYDITVTHVISTIDVILEESEYYRSAKEWTASSIDATWNEVSIPSRKAEHIQAINPEVDVAAGGKHVFTPEQLHFFDGTRDSKPIYLAILGRVYNVDGKKEYYGPGKSYHHFAGRDATRAFTTGDFQESGLIATTHGLSHDELLSIRDWVSFYDKEYPLVGVVADLYYDSEGQPTPELTDVLARVEKANEYRKAQAVEIEVFPPCNSEYNQNGGRVWCSTKSGGVERQWAGVPRKLIEPTTEKFRCACVKNFGPGVSGAEEVKSSSNRGDLDHPDLELFPDCSPTSNSCKIVS.

An N-terminal signal peptide occupies residues 1–34; sequence MDKNRRRTDDAGLMTKTLAGIAALVFFLSFICSS. A Cytochrome b5 heme-binding domain is found at 98 to 197; the sequence is KHVFTPEQLH…KEYPLVGVVA (100 aa).

Belongs to the cytochrome b5 family. MAPR subfamily.

The protein resides in the secreted. In terms of biological role, heme-binding protein. This Caenorhabditis elegans protein is Neuferricin homolog (tag-131).